The following is an 810-amino-acid chain: Volume-regulated anion channel subunit LRRC8A (810 aa).

An N-acetylmethionine modification is found at methionine 1. Topologically, residues 1 to 22 (MIPVTELRYFADTQPAYRILKP) are cytoplasmic. Residues 23–47 (WWDVFTDYISIVMLMIAVFGGTLQV) form a helical membrane-spanning segment. At 48-123 (TQDKMICLPC…YENRLHWFAK (76 aa)) the chain is on the extracellular side. 3 disulfides stabilise this stretch: cysteine 54–cysteine 310, cysteine 57–cysteine 65, and cysteine 113–cysteine 295. Residues asparagine 66 and asparagine 83 are each glycosylated (N-linked (GlcNAc...) asparagine). A helical membrane pass occupies residues 124–142 (YFPYLVLLHTLIFLACSNF). At 143–264 (WFKFPRTSSK…EEGDIVYRLY (122 aa)) the chain is on the cytoplasmic side. The residue at position 200 (threonine 200) is a Phosphothreonine. Serine 202 is modified (phosphoserine). At threonine 215 the chain carries Phosphothreonine. Position 217 is a phosphoserine (serine 217). Residues 265-286 (MRQTIIKVIKFFLIICYTVYYV) traverse the membrane as a helical segment. Topologically, residues 287–316 (HNIKFDVDCTVDIESLTGYRTYRCAHPLAT) are extracellular. A helical transmembrane segment spans residues 317–341 (LFKILASFYISLVIFYGLICMYTLW). The Cytoplasmic segment spans residues 342-810 (WMLRRSLKKY…RLWRADKEQA (469 aa)). LRR repeat units follow at residues 399–422 (ENKL…RLTK), 423–445 (NAQD…VFDL), 447–468 (ELEV…IAQL), 469–492 (TGLK…AFLR), 493–515 (ENLR…IYSL), 518–542 (LEEL…GLRE), 543–565 (LKRL…VTDV), 567–589 (VHLQ…SLKK), 590–613 (MVNL…IFSL), 614–637 (HNLQ…SFQH), 639–661 (HRLT…IGNL), 662–684 (TNLE…LFYC), 686–707 (KLRY…IGLL), 708–730 (QNLQ…LFQC), 732–753 (KLRA…VGEL), 754–776 (TNLT…LGEC), and 778–801 (LLKR…VKER). Residues 706-707 (LL) carry the Di-leucine motif motif.

The protein belongs to the LRRC8 family. In terms of assembly, heterohexamer; oligomerizes with other LRRC8 proteins (LRRC8B, LRRC8C, LRRC8D and/or LRRC8E) to form a heterohexamer. Can form homohexamers in vitro, but these have lower conductance than heterohexamers. Detected in a channel complex that contains LRRC8A, LRRC8C and LRRC8E. In vivo, the subunit composition may depend primarily on expression levels, and heterooligomeric channels containing various proportions of the different LRRC8 proteins may coexist. Interact with GRB2. Interacts with NOX4; this interaction prevents the ubiquitin-mediated degradation of LRRC8A. In terms of processing, N-glycosylated.

It localises to the cell membrane. The protein resides in the lysosome membrane. It catalyses the reaction chloride(in) = chloride(out). The catalysed reaction is iodide(out) = iodide(in). It carries out the reaction taurine(out) = taurine(in). The enzyme catalyses L-aspartate(out) = L-aspartate(in). It catalyses the reaction L-glutamate(out) = L-glutamate(in). The catalysed reaction is myo-inositol(out) = myo-inositol(in). It carries out the reaction 2',3'-cGAMP(out) = 2',3'-cGAMP(in). Inhibited by (4-[(2-butyl-6,7-dichloro-2-cyclopentyl-2,3-dihydro-1-oxo-1H-inden-5-yl)oxy]butanoic acid), which plugs the channel like a cork in a bottle by binding in the extracellular selectivity filter and sterically occluding ion conduction. Lipids may block conduction in closed heterohexameric channels. In terms of biological role, essential component of the volume-regulated anion channel (VRAC, also named VSOAC channel), an anion channel required to maintain a constant cell volume in response to extracellular or intracellular osmotic changes. The VRAC channel conducts iodide better than chloride and can also conduct organic osmolytes like taurine. Mediates efflux of amino acids, such as aspartate and glutamate, in response to osmotic stress. In complex with LRRC8C or LRRC8E, acts as a transporter of immunoreactive cyclic dinucleotide GMP-AMP (2'-3'-cGAMP), an immune messenger produced in response to DNA virus in the cytosol: mediates both import and export of 2'-3'-cGAMP, thereby promoting transfer of 2'-3'-cGAMP to bystander cells. In contrast, complexes containing LRRC8D inhibit transport of 2'-3'-cGAMP. Required for in vivo channel activity, together with at least one other family member (LRRC8B, LRRC8C, LRRC8D or LRRC8E); channel characteristics depend on the precise subunit composition. Can form functional channels by itself (in vitro). Involved in B-cell development: required for the pro-B cell to pre-B cell transition. Also required for T-cell development. Required for myoblast differentiation: VRAC activity promotes membrane hyperpolarization and regulates insulin-stimulated glucose metabolism and oxygen consumption. Also acts as a regulator of glucose-sensing in pancreatic beta cells: VRAC currents, generated in response to hypotonicity- or glucose-induced beta cell swelling, depolarize cells, thereby causing electrical excitation, leading to increase glucose sensitivity and insulin secretion. Also plays a role in lysosome homeostasis by forming functional lysosomal VRAC channels in response to low cytoplasmic ionic strength condition: lysosomal VRAC channels are necessary for the formation of large lysosome-derived vacuoles, which store and then expel excess water to maintain cytosolic water homeostasis. Acts as a key factor in NLRP3 inflammasome activation by modulating itaconate efflux and mitochondria function. In Rattus norvegicus (Rat), this protein is Volume-regulated anion channel subunit LRRC8A.